Consider the following 173-residue polypeptide: Small ribosomal subunit protein mS25 (173 aa).

Belongs to the mitochondrion-specific ribosomal protein mS25 family. In terms of assembly, component of the mitochondrial small ribosomal subunit (mt-SSU). Mature mammalian 55S mitochondrial ribosomes consist of a small (28S) and a large (39S) subunit. The 28S small subunit contains a 12S ribosomal RNA (12S mt-rRNA) and 30 different proteins. The 39S large subunit contains a 16S rRNA (16S mt-rRNA), a copy of mitochondrial valine transfer RNA (mt-tRNA(Val)), which plays an integral structural role, and 52 different proteins.

It localises to the mitochondrion. The sequence is that of Small ribosomal subunit protein mS25 (MRPS25) from Homo sapiens (Human).